The sequence spans 943 residues: Isoleucine--tRNA ligase (943 aa).

Residues 58–68 (PYANGTIHIGH) carry the 'HIGH' region motif. Glutamate 567 is an L-isoleucyl-5'-AMP binding site. The 'KMSKS' region motif lies at 608-612 (KMSKS). Lysine 611 provides a ligand contact to ATP. Residues cysteine 906, cysteine 909, cysteine 926, and cysteine 929 each coordinate Zn(2+).

Belongs to the class-I aminoacyl-tRNA synthetase family. IleS type 1 subfamily. As to quaternary structure, monomer. Zn(2+) is required as a cofactor.

It localises to the cytoplasm. It catalyses the reaction tRNA(Ile) + L-isoleucine + ATP = L-isoleucyl-tRNA(Ile) + AMP + diphosphate. Catalyzes the attachment of isoleucine to tRNA(Ile). As IleRS can inadvertently accommodate and process structurally similar amino acids such as valine, to avoid such errors it has two additional distinct tRNA(Ile)-dependent editing activities. One activity is designated as 'pretransfer' editing and involves the hydrolysis of activated Val-AMP. The other activity is designated 'posttransfer' editing and involves deacylation of mischarged Val-tRNA(Ile). In Pseudomonas fluorescens (strain SBW25), this protein is Isoleucine--tRNA ligase.